Consider the following 237-residue polypeptide: Demethylmenaquinone methyltransferase (237 aa).

Residues Thr-58, Asp-79, and Asn-106–Ala-107 each bind S-adenosyl-L-methionine.

Belongs to the class I-like SAM-binding methyltransferase superfamily. MenG/UbiE family.

The enzyme catalyses a 2-demethylmenaquinol + S-adenosyl-L-methionine = a menaquinol + S-adenosyl-L-homocysteine + H(+). The protein operates within quinol/quinone metabolism; menaquinone biosynthesis; menaquinol from 1,4-dihydroxy-2-naphthoate: step 2/2. Methyltransferase required for the conversion of demethylmenaquinol (DMKH2) to menaquinol (MKH2). This Bacillus cereus (strain ATCC 10987 / NRS 248) protein is Demethylmenaquinone methyltransferase.